A 287-amino-acid polypeptide reads, in one-letter code: Large ribosomal subunit protein uL2 (287 aa).

Residues 222–266 form a disordered region; it reads RGIRPTVRGSAMNPNDHPHGGGEGRSPVGRDAPRTPWGKRHMGVK.

The protein belongs to the universal ribosomal protein uL2 family. As to quaternary structure, part of the 50S ribosomal subunit. Forms a bridge to the 30S subunit in the 70S ribosome.

Its function is as follows. One of the primary rRNA binding proteins. Required for association of the 30S and 50S subunits to form the 70S ribosome, for tRNA binding and peptide bond formation. It has been suggested to have peptidyltransferase activity; this is somewhat controversial. Makes several contacts with the 16S rRNA in the 70S ribosome. The protein is Large ribosomal subunit protein uL2 of Mycoplasma pneumoniae (strain ATCC 29342 / M129 / Subtype 1) (Mycoplasmoides pneumoniae).